Reading from the N-terminus, the 781-residue chain is Mitochondrial inner membrane m-AAA protease component paraplegin (781 aa).

The N-terminal 43 residues, 1 to 43 (MAAALLLLRGLRPGPEPRPRRLWGLLSGRGPGLSSGAGARRPY), are a transit peptide targeting the mitochondrion. 2 disordered regions span residues 22-56 (LWGLLSGRGPGLSSGAGARRPYAARGTPVGPAAAG) and 103-135 (TSRMKQKNKDNDKPKGKTPEDDEEEKRRKERED). Residues 36–56 (GAGARRPYAARGTPVGPAAAG) are compositionally biased toward low complexity. A propeptide spans 44-105 (AARGTPVGPA…GSTLYFNTSR (62 aa)) (removed in mature form). Residues 106 to 144 (MKQKNKDNDKPKGKTPEDDEEEKRRKEREDQMYRERLRT) are Mitochondrial matrix-facing. Positions 109 to 135 (KNKDNDKPKGKTPEDDEEEKRRKERED) are enriched in basic and acidic residues. A helical membrane pass occupies residues 145–165 (LFIIALVMSLLNSLSTSGGSI). Over 166-248 (SWADFVNEML…DRIPVSYKRT (83 aa)) the chain is Mitochondrial intermembrane. A helical transmembrane segment spans residues 249-269 (GFFGNALYALGMTAVGLAILW). Over 270–781 (YVFRLAGMTG…ASGEEEAPAP (512 aa)) the chain is Mitochondrial matrix. ATP-binding residues include Ala312, Gly352, Cys353, Gly354, Lys355, Thr356, and Leu357. Tyr505 is subject to 3'-nitrotyrosine. His574 is a Zn(2+) binding site. Residue Glu575 is part of the active site. Residues His578 and Asp650 each contribute to the Zn(2+) site. The segment at 701 to 781 (HEAKLLVAKA…ASGEEEAPAP (81 aa)) is interaction with PPIF.

The protein in the N-terminal section; belongs to the AAA ATPase family. In the C-terminal section; belongs to the peptidase M41 family. In terms of assembly, forms heterohexamers with SPG7 and AFG3L1. The m-AAA protease is either composed of homohexamers of AFG3L2 or heterohexamers of AFG3L1, AFG3L2 and/or SPG7. Component of the mitochondrial permeability transition pore complex (mPTPC), at least composed of SPG7, VDAC1 and PPIF. Interacts with MAIP1. Zn(2+) is required as a cofactor. Post-translationally, upon import into the mitochondrion, the N-terminal transit peptide is cleaved by the mitochondrial-processing peptidase (MPP) to generate an intermediate form which undergoes a second proteolytic cleavage mediated by proteases AFG3L1 and/or AFG3L2 removing an additional N-terminal fragment to generate the proteolytically active mature form. In terms of tissue distribution, expressed in the brain and retina (at protein level).

The protein localises to the mitochondrion inner membrane. The catalysed reaction is ATP + H2O = ADP + phosphate + H(+). Its function is as follows. Catalytic component of the m-AAA protease, a protease that plays a key role in proteostasis of inner mitochondrial membrane proteins, and which is essential for axonal and neuron development. SPG7 possesses both ATPase and protease activities: the ATPase activity is required to unfold substrates, threading them into the internal proteolytic cavity for hydrolysis into small peptide fragments. The m-AAA protease exerts a dual role in the mitochondrial inner membrane: it mediates the processing of specific regulatory proteins and ensures protein quality control by degrading misfolded polypeptides. Mediates protein maturation of the mitochondrial ribosomal subunit MRPL32/bL32m by catalyzing the cleavage of the presequence of MRPL32/bL32m prior to assembly into the mitochondrial ribosome. Acts as a regulator of calcium in neurons by mediating degradation of SMDT1/EMRE before its assembly with the uniporter complex, limiting the availability of SMDT1/EMRE for MCU assembly and promoting efficient assembly of gatekeeper subunits with MCU. Also regulates mitochondrial calcium by catalyzing degradation of MCU. Plays a role in the formation and regulation of the mitochondrial permeability transition pore (mPTP) and its proteolytic activity is dispensable for this function. In Mus musculus (Mouse), this protein is Mitochondrial inner membrane m-AAA protease component paraplegin.